Consider the following 180-residue polypeptide: Crossover junction endodeoxyribonuclease RuvC (180 aa).

Active-site residues include aspartate 7, glutamate 66, and aspartate 138. 3 residues coordinate Mg(2+): aspartate 7, glutamate 66, and aspartate 138.

The protein belongs to the RuvC family. In terms of assembly, homodimer which binds Holliday junction (HJ) DNA. The HJ becomes 2-fold symmetrical on binding to RuvC with unstacked arms; it has a different conformation from HJ DNA in complex with RuvA. In the full resolvosome a probable DNA-RuvA(4)-RuvB(12)-RuvC(2) complex forms which resolves the HJ. Mg(2+) serves as cofactor.

The protein resides in the cytoplasm. The catalysed reaction is Endonucleolytic cleavage at a junction such as a reciprocal single-stranded crossover between two homologous DNA duplexes (Holliday junction).. Functionally, the RuvA-RuvB-RuvC complex processes Holliday junction (HJ) DNA during genetic recombination and DNA repair. Endonuclease that resolves HJ intermediates. Cleaves cruciform DNA by making single-stranded nicks across the HJ at symmetrical positions within the homologous arms, yielding a 5'-phosphate and a 3'-hydroxyl group; requires a central core of homology in the junction. The consensus cleavage sequence is 5'-(A/T)TT(C/G)-3'. Cleavage occurs on the 3'-side of the TT dinucleotide at the point of strand exchange. HJ branch migration catalyzed by RuvA-RuvB allows RuvC to scan DNA until it finds its consensus sequence, where it cleaves and resolves the cruciform DNA. The chain is Crossover junction endodeoxyribonuclease RuvC from Burkholderia pseudomallei (strain 1710b).